Consider the following 212-residue polypeptide: Thymidylate kinase (212 aa).

11–18 (GPEGAGKT) lines the ATP pocket.

The protein belongs to the thymidylate kinase family.

It carries out the reaction dTMP + ATP = dTDP + ADP. In terms of biological role, phosphorylation of dTMP to form dTDP in both de novo and salvage pathways of dTTP synthesis. This is Thymidylate kinase from Streptococcus pneumoniae serotype 19F (strain G54).